The primary structure comprises 317 residues: Mitochondrial thiamine pyrophosphate carrier 1 (317 aa).

Transmembrane regions (helical) follow at residues 15–37 (TVSW…MATA), 80–100 (IPAT…YSWF), 118–138 (LTVG…LDLL), 168–190 (GFFT…MFLT), 205–227 (FWSR…TMVF), and 281–300 (GLTM…LFVY). Solcar repeat units follow at residues 16-103 (VSWY…FNNV), 112-197 (SQQG…VNIV), and 206-306 (WSRP…TMDL).

Belongs to the mitochondrial carrier (TC 2.A.29) family.

It is found in the mitochondrion inner membrane. Mitochondrial transporter that mediates uptake of thiamine pyrophosphate (ThPP) into mitochondria. This chain is Mitochondrial thiamine pyrophosphate carrier 1 (TPC1), found in Kluyveromyces lactis (strain ATCC 8585 / CBS 2359 / DSM 70799 / NBRC 1267 / NRRL Y-1140 / WM37) (Yeast).